Here is a 188-residue protein sequence, read N- to C-terminus: FUN14 domain-containing protein 1B (188 aa).

Residues 21–41 form a helical membrane-spanning segment; the sequence is VVNIDGNIFSIYVCFFVCFFF. A YXXL motif is present at residues 52–55; sequence YEVL. 3 consecutive transmembrane segments (helical) span residues 82 to 102, 109 to 129, and 167 to 187; these read YSVA…GFLF, AATA…GGYI, and FFKK…IGLA.

This sequence belongs to the FUN14 family.

The protein localises to the mitochondrion outer membrane. Acts as an activator of hypoxia-induced mitophagy, an important mechanism for mitochondrial quality control. The chain is FUN14 domain-containing protein 1B (fundc1-b) from Xenopus laevis (African clawed frog).